Reading from the N-terminus, the 455-residue chain is Elongation factor Tu, mitochondrial (455 aa).

Residues 1–46 constitute a mitochondrion transit peptide; sequence MTTMAAATLLRATPHFSGLAAGRTFLLQGLLRLLKAPALPLLCRGL. In terms of domain architecture, tr-type G spans 58–254; it reads KPHVNVGTIG…AVDTYIPVPA (197 aa). The segment at 67 to 74 is G1; the sequence is GHVDHGKT. GTP-binding residues include Asp70, Gly72, Lys73, Thr74, and Thr75. Thr74 contributes to the Mg(2+) binding site. The residue at position 82 (Lys82) is an N6-acetyllysine. Lys91 carries the N6-acetyllysine; alternate modification. Position 91 is an N6-succinyllysine; alternate (Lys91). The G2 stretch occupies residues 108-112; sequence GITIN. The tract at residues 129-132 is G3; sequence DCPG. Positions 184, 187, 222, 223, and 224 each coordinate GTP. Positions 184-187 are G4; it reads NKAD. The interval 222-224 is G5; sequence SAL. Lys237 carries the N6-succinyllysine modification. N6-acetyllysine is present on Lys259. At Thr281 the chain carries Phosphothreonine. Lys289 is modified (N6-succinyllysine). The residue at position 315 (Ser315) is a Phosphoserine. N6-acetyllysine is present on residues Lys364 and Lys421.

It belongs to the TRAFAC class translation factor GTPase superfamily. Classic translation factor GTPase family. EF-Tu/EF-1A subfamily. In terms of assembly, interacts with NLRX1. Interacts with ATG16L1. (Microbial infection) Interacts with human parainfluenza virus 3 matrix protein; this interaction inhibits RLR-mediated type I interferon production while promoting autophagy. As to quaternary structure, (Microbial infection) Interacts with Hantaan hantavirus glycoprotein N; this interaction contributes to the virus-induced degradation of mitochondria by autophagy, which leads to degradation of MAVS and inhibition of type I interferon (IFN) responses.

It is found in the mitochondrion. It catalyses the reaction GTP + H2O = GDP + phosphate + H(+). GTP hydrolase that promotes the GTP-dependent binding of aminoacyl-tRNA to the A-site of ribosomes during protein biosynthesis. Also plays a role in the regulation of autophagy and innate immunity. Recruits ATG5-ATG12 and NLRX1 at mitochondria and serves as a checkpoint of the RIGI-MAVS pathway. In turn, inhibits RLR-mediated type I interferon while promoting autophagy. This is Elongation factor Tu, mitochondrial (TUFM) from Homo sapiens (Human).